A 391-amino-acid chain; its full sequence is MTSPTRRRTAKRRRRKLNKRGKLLFGLLAVMVCITIWNALHRNSEENEPSQETAAVSNTDQKKEVKKKTAKKSEEQIKTVDRNQKISNYLKEIGFSGTAMIVRNGEIVTNKGFGYADRKHYIQNNPLTSFYVGSSQKALIATAILQLEEKGKLQTSDPVSTYLPHFPNGQTITLKNLLTHTSGINGHIEGNGAITPDDLIKDIELQGIKRQPGVWDYKDSNYSVLAYIIAEVSGEPYEQYIKNHIFKPAGMTHAGFYKTYEKEPYPAVGYKMEGSKTVTPYIPDLSQLYGAGDIYMSAIDMYKFDQALIDGKLYSQKSYEKMFTPGSSSTYGMGFYVAPGSYSNHGVMPGFNILNSFSKSGQTIVILFSNIQNNAKLGQVNNKIYQLLNQE.

A helical transmembrane segment spans residues 21–40; sequence GKLLFGLLAVMVCITIWNAL. Positions 44–76 are disordered; the sequence is SEENEPSQETAAVSNTDQKKEVKKKTAKKSEEQ. The span at 50–59 shows a compositional bias: polar residues; the sequence is SQETAAVSNT.

Belongs to the beta-lactamase family.

It localises to the cell membrane. This is Putative penicillin-binding protein PbpX (pbpX) from Bacillus subtilis (strain 168).